Reading from the N-terminus, the 502-residue chain is Probable malate:quinone oxidoreductase (502 aa).

The protein belongs to the MQO family. It depends on FAD as a cofactor.

It catalyses the reaction (S)-malate + a quinone = a quinol + oxaloacetate. It participates in carbohydrate metabolism; tricarboxylic acid cycle; oxaloacetate from (S)-malate (quinone route): step 1/1. The chain is Probable malate:quinone oxidoreductase from Synechococcus sp. (strain CC9902).